Consider the following 741-residue polypeptide: uncharacterized protein (741 aa).

Positions 1–22 (MKSVKIIIILALALLIQISHIA) are cleaved as a signal peptide.

This is an uncharacterized protein from Archaeoglobus fulgidus (strain ATCC 49558 / DSM 4304 / JCM 9628 / NBRC 100126 / VC-16).